We begin with the raw amino-acid sequence, 120 residues long: Ribonuclease P protein component (120 aa).

The protein belongs to the RnpA family. As to quaternary structure, consists of a catalytic RNA component (M1 or rnpB) and a protein subunit.

The enzyme catalyses Endonucleolytic cleavage of RNA, removing 5'-extranucleotides from tRNA precursor.. In terms of biological role, RNaseP catalyzes the removal of the 5'-leader sequence from pre-tRNA to produce the mature 5'-terminus. It can also cleave other RNA substrates such as 4.5S RNA. The protein component plays an auxiliary but essential role in vivo by binding to the 5'-leader sequence and broadening the substrate specificity of the ribozyme. In Dictyoglomus thermophilum (strain ATCC 35947 / DSM 3960 / H-6-12), this protein is Ribonuclease P protein component.